A 323-amino-acid chain; its full sequence is Acetyl-coenzyme A carboxylase carboxyl transferase subunit alpha (323 aa).

One can recognise a CoA carboxyltransferase C-terminal domain in the interval Leu-40–Thr-293.

It belongs to the AccA family. In terms of assembly, acetyl-CoA carboxylase is a heterohexamer composed of biotin carboxyl carrier protein (AccB), biotin carboxylase (AccC) and two subunits each of ACCase subunit alpha (AccA) and ACCase subunit beta (AccD).

The protein localises to the cytoplasm. The catalysed reaction is N(6)-carboxybiotinyl-L-lysyl-[protein] + acetyl-CoA = N(6)-biotinyl-L-lysyl-[protein] + malonyl-CoA. It functions in the pathway lipid metabolism; malonyl-CoA biosynthesis; malonyl-CoA from acetyl-CoA: step 1/1. Functionally, component of the acetyl coenzyme A carboxylase (ACC) complex. First, biotin carboxylase catalyzes the carboxylation of biotin on its carrier protein (BCCP) and then the CO(2) group is transferred by the carboxyltransferase to acetyl-CoA to form malonyl-CoA. The chain is Acetyl-coenzyme A carboxylase carboxyl transferase subunit alpha from Polynucleobacter asymbioticus (strain DSM 18221 / CIP 109841 / QLW-P1DMWA-1) (Polynucleobacter necessarius subsp. asymbioticus).